A 477-amino-acid chain; its full sequence is UDP-galactose-lipid carrier transferase (477 aa).

The next 6 helical transmembrane spans lie at 16–36 (SLAL…IVLI), 52–72 (LDLK…WFWV), 93–113 (TILI…WELS), 115–135 (WIWI…RACV), 175–195 (VIAF…GVPV), and 284–304 (FDLV…VILI). The Cytoplasmic portion of the chain corresponds to 305 to 477 (FMVSRDGGAP…GVVLKRDGAY (173 aa)).

It belongs to the bacterial sugar transferase family.

The protein localises to the cell membrane. Its pathway is glycan metabolism; exopolysaccharide biosynthesis. Involved in the biosynthesis of amylovoran which functions as a virulence factor. May act as a sugar transferase and may be involved in the export of the repeating unit by flipping the lipid carrier to the periplasmic face of the inner membrane. In Erwinia amylovora (Fire blight bacteria), this protein is UDP-galactose-lipid carrier transferase (amsG).